The chain runs to 203 residues: tRNA (guanine-N(7)-)-methyltransferase (203 aa).

E34, E59, D86, and D107 together coordinate S-adenosyl-L-methionine. The active site involves D107. Residues K111, D143, and 181–184 contribute to the substrate site; that span reads TSYE.

Belongs to the class I-like SAM-binding methyltransferase superfamily. TrmB family.

It catalyses the reaction guanosine(46) in tRNA + S-adenosyl-L-methionine = N(7)-methylguanosine(46) in tRNA + S-adenosyl-L-homocysteine. The protein operates within tRNA modification; N(7)-methylguanine-tRNA biosynthesis. In terms of biological role, catalyzes the formation of N(7)-methylguanine at position 46 (m7G46) in tRNA. The polypeptide is tRNA (guanine-N(7)-)-methyltransferase (Mycoplasmopsis pulmonis (strain UAB CTIP) (Mycoplasma pulmonis)).